A 193-amino-acid chain; its full sequence is Interleukin-18 (193 aa).

Residues 1-36 (MAANLIEDNCINLVKMKFVNNTLYFKAESDEGLESD) constitute a propeptide that is removed on maturation.

It belongs to the IL-1 family. As to quaternary structure, forms a ternary complex with ligand-binding receptor subunit IL18R1 and signaling receptor subunit IL18RAP at the plasma membrane. Mature IL18 first binds to IL18R1 forming a low affinity binary complex, which then interacts with IL18RAP to form a high affinity ternary complex that signals inside the cell. Interacts with cargo receptor TMED10; the interaction mediates the translocation from the cytoplasm into the ERGIC (endoplasmic reticulum-Golgi intermediate compartment) and thereby secretion. Post-translationally, the pro-IL-18 precursor is processed by CASP1, CASP4 or CASP5 to yield its mature, active form. The pro-IL-18 precursor features autoinhibitory interactions between the propeptide and the post-cleavage-site region, preventing recognition by the IL18R1 receptor. Processing by CASP1, CASP4 or CASP5 induces conformational changes to generate critical receptor-binding sites. The mature form is then secreted and released in the extracellular milieu by passing through the gasdermin-D (GSDMD) pore. In contrast, cleavage by CASP3 inactivates IL18.

It localises to the cytoplasm. The protein localises to the cytosol. It is found in the secreted. In terms of biological role, pro-inflammatory cytokine primarily involved in epithelial barrier repair, polarized T-helper 1 (Th1) cell and natural killer (NK) cell immune responses. Upon binding to IL18R1 and IL18RAP, forms a signaling ternary complex which activates NF-kappa-B, triggering synthesis of inflammatory mediators. Synergizes with IL12/interleukin-12 to induce IFNG synthesis from T-helper 1 (Th1) cells and natural killer (NK) cells. Involved in transduction of inflammation downstream of pyroptosis: its mature form is specifically released in the extracellular milieu by passing through the gasdermin-D (GSDMD) pore. This Canis lupus familiaris (Dog) protein is Interleukin-18 (IL18).